Consider the following 213-residue polypeptide: Thymidylate kinase (213 aa).

10-17 (GLEGAGKT) contacts ATP.

Belongs to the thymidylate kinase family.

It carries out the reaction dTMP + ATP = dTDP + ADP. Phosphorylation of dTMP to form dTDP in both de novo and salvage pathways of dTTP synthesis. This is Thymidylate kinase from Escherichia coli O7:K1 (strain IAI39 / ExPEC).